A 570-amino-acid polypeptide reads, in one-letter code: Pyruvate decarboxylase (570 aa).

Positions 1-2 (MV) are cleaved as a propeptide — removed in mature form. Residues D33 and H120 each contribute to the substrate site. Residues 394–476 (DSWFNGIQLK…MLINNRGYTI (83 aa)) form a thiamine pyrophosphate binding region. Residues D444, N471, and G473 each coordinate Mg(2+). E477 serves as a coordination point for substrate.

The protein belongs to the TPP enzyme family. In terms of assembly, homomer. It depends on a metal cation as a cofactor. Thiamine diphosphate serves as cofactor.

It is found in the cytoplasm. The enzyme catalyses a 2-oxocarboxylate + H(+) = an aldehyde + CO2. It functions in the pathway carbohydrate metabolism; pyruvate metabolism. This chain is Pyruvate decarboxylase (cfp), found in Neurospora crassa (strain ATCC 24698 / 74-OR23-1A / CBS 708.71 / DSM 1257 / FGSC 987).